The primary structure comprises 173 residues: ATP synthase subunit delta (173 aa).

The protein belongs to the ATPase delta chain family. As to quaternary structure, F-type ATPases have 2 components, F(1) - the catalytic core - and F(0) - the membrane proton channel. F(1) has five subunits: alpha(3), beta(3), gamma(1), delta(1), epsilon(1). F(0) has three main subunits: a(1), b(2) and c(10-14). The alpha and beta chains form an alternating ring which encloses part of the gamma chain. F(1) is attached to F(0) by a central stalk formed by the gamma and epsilon chains, while a peripheral stalk is formed by the delta and b chains.

Its subcellular location is the cell inner membrane. Its function is as follows. F(1)F(0) ATP synthase produces ATP from ADP in the presence of a proton or sodium gradient. F-type ATPases consist of two structural domains, F(1) containing the extramembraneous catalytic core and F(0) containing the membrane proton channel, linked together by a central stalk and a peripheral stalk. During catalysis, ATP synthesis in the catalytic domain of F(1) is coupled via a rotary mechanism of the central stalk subunits to proton translocation. Functionally, this protein is part of the stalk that links CF(0) to CF(1). It either transmits conformational changes from CF(0) to CF(1) or is implicated in proton conduction. This chain is ATP synthase subunit delta, found in Campylobacter jejuni subsp. jejuni serotype O:2 (strain ATCC 700819 / NCTC 11168).